The sequence spans 506 residues: NAD(P)H-quinone oxidoreductase chain 4, chloroplastic (506 aa).

Transmembrane regions (helical) follow at residues 5–25 (FPLL…IPFL), 35–55 (WYTL…FIYK), 88–108 (MPLI…AWPI), 114–134 (LFYF…LSQD), 135–155 (ILLF…LLSL), 168–188 (FILY…TMAF), 209–229 (ALEI…LPAF), 243–263 (HYST…YGLI), 275–295 (VIFS…GALT), 309–329 (SSIS…DLGL), 331–351 (GAMM…FLAG), 386–406 (SLAL…LGFL), 415–435 (FIAL…IYLL), and 463–483 (IFIM…PNLT).

It belongs to the complex I subunit 4 family.

Its subcellular location is the plastid. The protein localises to the chloroplast thylakoid membrane. The enzyme catalyses a plastoquinone + NADH + (n+1) H(+)(in) = a plastoquinol + NAD(+) + n H(+)(out). It carries out the reaction a plastoquinone + NADPH + (n+1) H(+)(in) = a plastoquinol + NADP(+) + n H(+)(out). This chain is NAD(P)H-quinone oxidoreductase chain 4, chloroplastic, found in Chaetosphaeridium globosum (Charophycean green alga).